The primary structure comprises 301 residues: Syntaxin-17 (301 aa).

Ser2 is subject to N-acetylserine. The Cytoplasmic segment spans residues 2-227; that stretch reads SEDEEKVKLR…KNLQKAAKYK (226 aa). Residue Lys41 is modified to N6-acetyllysine. Positions 49–128 form a coiled coil; the sequence is DKLHEEHINA…QVKNEEALLQ (80 aa). The residue at position 156 (Tyr156) is a Phosphotyrosine; by ABL1. In terms of domain architecture, t-SNARE coiled-coil homology spans 161-223; sequence IPRDQNAAES…EEGTKNLQKA (63 aa). A helical transmembrane segment spans residues 228–248; sequence LAALPVAGAVIGGVVGGPIGL. The necessary and sufficient for localization to autophagosome stretch occupies residues 228–274; it reads LAALPVAGAVIGGVVGGPIGLLAGFKVAGIAAALGGGVLGFTGGKLI. The Lumenal segment spans residues 249 to 253; sequence LAGFK. A helical transmembrane segment spans residues 254–274; the sequence is VAGIAAALGGGVLGFTGGKLI. Residues 273–301 are required for interaction with COPB1, TMED9 and TMED10; the sequence is LIQRRKQKMMEKLTSSCPDLPSQSDKKCS. The Cytoplasmic portion of the chain corresponds to 275-301; sequence QRRKQKMMEKLTSSCPDLPSQSDKKCS. Residue Ser288 is modified to Phosphoserine. The short motif at 298-301 is the Endoplasmic reticulum retention signal element; sequence KKCS.

The protein belongs to the syntaxin family. As to quaternary structure, forms a SNARE complex composed of VAMP8, SNAP29 and STX17 involved in fusion of autophagosome with lysosome. May interact with VAMP7. May interact with VTI1B. Probably interacts with BET1, SCFD1 and SEC22B. Interacts with PTPN2 and ABL1; involved in STX17 phosphorylation. Interacts with COPB1. Interacts with TMED9 and TMED10; the interaction is direct. Interacts with RUBCNL/PACER; promoting targeting of RUBCNL/PACER to autophagosome. Interacts with VAMP8, SNAP29, VPS39 and VPS41; these interactions are increased in the absence of TMEM39A. Interacts with IRGM; promoting STX17 recruitment to autophagosomes. Interacts with ATG8 proteins GABARAP and MAP1LC3B. Interacts with RNF115; this interaction enhances STX17 stability which in turn promotes autophagosome maturation. Interacts with RAB39A (GTP-bound); the interaction promotes autophagosome-lysosome membrane fusion driven by STX17-SNAP29-VAMP8. Interacts with RAB39B; the interaction may promote a different fonction in autophagy as compared with RAB39A. Post-translationally, phosphorylated at Tyr-156 probably by ABL1. Dephosphorylation by PTPN2; regulates exit from the endoplasmic reticulum. As to expression, detected in all tissues examined with higher expression in steroidogenic tissues including testis and adrenal gland (at protein level). Highly expressed in liver and testis. Also found in brain, heart, kidney, lung, placenta, skeletal muscle and spleen.

It is found in the endoplasmic reticulum membrane. The protein resides in the smooth endoplasmic reticulum membrane. It localises to the endoplasmic reticulum-Golgi intermediate compartment membrane. Its subcellular location is the cytoplasmic vesicle. The protein localises to the autophagosome membrane. It is found in the COPII-coated vesicle membrane. The protein resides in the cytoplasm. It localises to the cytosol. Its subcellular location is the mitochondrion membrane. The protein localises to the autolysosome membrane. Functionally, SNAREs, soluble N-ethylmaleimide-sensitive factor-attachment protein receptors, are essential proteins for fusion of cellular membranes. SNAREs localized on opposing membranes assemble to form a trans-SNARE complex, an extended, parallel four alpha-helical bundle that drives membrane fusion. STX17 is a SNARE of the autophagosome involved in autophagy through the direct control of autophagosome membrane fusion with the lysosome membrane. May also play a role in the early secretory pathway where it may maintain the architecture of the endoplasmic reticulum-Golgi intermediate compartment/ERGIC and Golgi and/or regulate transport between the endoplasmic reticulum, the ERGIC and the Golgi. The polypeptide is Syntaxin-17 (Rattus norvegicus (Rat)).